We begin with the raw amino-acid sequence, 422 residues long: Phospho-N-acetylmuramoyl-pentapeptide-transferase (422 aa).

Transmembrane regions (helical) follow at residues 28–48 (LMAV…FINL), 71–91 (VGVP…PCLL), 95–115 (LDNI…SLGF), 136–156 (IIGQ…SPDV), 211–231 (AGWF…SNGA), 239–259 (GMAA…AYVS), 279–299 (LVIY…YNAY), 313–333 (IGGI…IPIL), and 399–419 (KITV…IITL).

This sequence belongs to the glycosyltransferase 4 family. MraY subfamily. Mg(2+) is required as a cofactor.

It is found in the cell inner membrane. It catalyses the reaction UDP-N-acetyl-alpha-D-muramoyl-L-alanyl-gamma-D-glutamyl-meso-2,6-diaminopimeloyl-D-alanyl-D-alanine + di-trans,octa-cis-undecaprenyl phosphate = di-trans,octa-cis-undecaprenyl diphospho-N-acetyl-alpha-D-muramoyl-L-alanyl-D-glutamyl-meso-2,6-diaminopimeloyl-D-alanyl-D-alanine + UMP. The protein operates within cell wall biogenesis; peptidoglycan biosynthesis. Functionally, catalyzes the initial step of the lipid cycle reactions in the biosynthesis of the cell wall peptidoglycan: transfers peptidoglycan precursor phospho-MurNAc-pentapeptide from UDP-MurNAc-pentapeptide onto the lipid carrier undecaprenyl phosphate, yielding undecaprenyl-pyrophosphoryl-MurNAc-pentapeptide, known as lipid I. This chain is Phospho-N-acetylmuramoyl-pentapeptide-transferase, found in Bacteroides thetaiotaomicron (strain ATCC 29148 / DSM 2079 / JCM 5827 / CCUG 10774 / NCTC 10582 / VPI-5482 / E50).